The following is a 440-amino-acid chain: Trigger factor (440 aa).

The PPIase FKBP-type domain occupies 163 to 248; that stretch reads GDGVTVDFEG…VKKIESAHLP (86 aa).

The protein belongs to the FKBP-type PPIase family. Tig subfamily.

It is found in the cytoplasm. The enzyme catalyses [protein]-peptidylproline (omega=180) = [protein]-peptidylproline (omega=0). Its function is as follows. Involved in protein export. Acts as a chaperone by maintaining the newly synthesized protein in an open conformation. Functions as a peptidyl-prolyl cis-trans isomerase. The protein is Trigger factor of Verminephrobacter eiseniae (strain EF01-2).